A 208-amino-acid polypeptide reads, in one-letter code: Myosin light chain 6B (208 aa).

Residues 1–51 are disordered; it reads MPPKKDVPVKKPAGPSISKPAAKPAAAGAPPAKTKAEPAVPQAPQKTQEPP. Residues 10 to 40 show a composition bias toward low complexity; that stretch reads KKPAGPSISKPAAKPAAAGAPPAKTKAEPAV. EF-hand domains are found at residues 64-99, 141-176, and 176-208; these read DQLEEFKEAFELFDRVGDGKILYSQCGDVMRALGQN, GTYEDYLEGFRVFDKEGNGKVMGAELRHVLTTLGEK, and KMTEEEVETVLAGHEDSNGCINYEAFLKHILSV.

In terms of assembly, myosin is a hexamer of 2 heavy chains and 4 light chains.

Its function is as follows. Regulatory light chain of myosin. Does not bind calcium. This chain is Myosin light chain 6B (MYL6B), found in Homo sapiens (Human).